The primary structure comprises 193 residues: ECF RNA polymerase sigma factor SigK (193 aa).

The sigma-70 factor domain-2 stretch occupies residues 35–101 (LYDRTRSRVY…RRAVDRVRSE (67 aa)). Positions 59–62 (ETTQ) match the Polymerase core binding motif. The interval 140-187 (MGSLSDLQREAIQLAYYEGLTYVQVSERLSANLATIKSRMRDGIRGLK) is sigma-70 factor domain-4. Residues 161 to 180 (YVQVSERLSANLATIKSRMR) constitute a DNA-binding region (H-T-H motif).

This sequence belongs to the sigma-70 factor family. ECF subfamily. As to quaternary structure, interacts transiently with the RNA polymerase catalytic core formed by RpoA, RpoB, RpoC and RpoZ (2 alpha, 1 beta, 1 beta' and 1 omega subunit) to form the RNA polymerase holoenzyme that can initiate transcription. Interacts (via sigma-70 factor domain 4) with anti-sigma-K factor RskA.

In terms of biological role, sigma factors are initiation factors that promote the attachment of RNA polymerase to specific initiation sites and are then released. Extracytoplasmic function (ECF) sigma factors are held in an inactive form by an anti-sigma factor until released by regulated intramembrane proteolysis. This Mycobacterium sp. (strain JLS) protein is ECF RNA polymerase sigma factor SigK (sigK).